Reading from the N-terminus, the 144-residue chain is Interleukin-3 (144 aa).

The signal sequence occupies residues 1 to 17; it reads MSSLSILHLLLLLLALH.

Belongs to the IL-3 family. Monomer.

The protein resides in the secreted. Its function is as follows. Granulocyte/macrophage colony-stimulating factors are cytokines that act in hematopoiesis by controlling the production, differentiation, and function of 2 related white cell populations of the blood, the granulocytes and the monocytes-macrophages. This CSF induces granulocytes, macrophages, mast cells, stem cells, erythroid cells, eosinophils and megakaryocytes. The sequence is that of Interleukin-3 (IL3) from Bos taurus (Bovine).